We begin with the raw amino-acid sequence, 336 residues long: Fimbrial adhesin PapGII (336 aa).

A signal peptide spans Met-1–Ala-20. Cystine bridges form between Cys-64–Cys-138 and Cys-217–Cys-249. D-galactose is bound by residues Glu-79 and Gly-124 to Trp-127.

The protein belongs to the adhesin PapG family.

Its subcellular location is the secreted. It is found in the fimbrium. In terms of biological role, tip adhesin component of type P pili that plays a critical role in kidney infection through targeted interaction with the globoseries glycolipids containing the Gal-alpha(1-4)-Gal disaccharide present on uroepithelial cells. In turn, transcriptionally regulates host gene expression in kidney cells, leading to inflammatory pathway activation and renal tissue damage. Acts thereby as key determinant of invasive uropathogenic E.coli (UPEC), which cause pyelonephritis and urinary-source bacteremia. The polypeptide is Fimbrial adhesin PapGII (Escherichia coli O6:H1 (strain CFT073 / ATCC 700928 / UPEC)).